The chain runs to 117 residues: Non-specific lipid-transfer protein 1 (117 aa).

The first 26 residues, 1–26, serve as a signal peptide directing secretion; that stretch reads MAYSAMTKLALVVALCMVVSVPIAQA. 4 disulfides stabilise this stretch: Cys29–Cys76, Cys39–Cys53, Cys54–Cys99, and Cys74–Cys113.

It belongs to the plant LTP family.

Plant non-specific lipid-transfer proteins transfer phospholipids as well as galactolipids across membranes. May play a role in wax or cutin deposition in the cell walls of expanding epidermal cells and certain secretory tissues. The protein is Non-specific lipid-transfer protein 1 of Prunus dulcis (Almond).